We begin with the raw amino-acid sequence, 1522 residues long: Paired amphipathic helix protein pst1 (1522 aa).

Positions 139–174 (TILSSTDSNIPRPGTVKSSASPFVPNQNPSAPPPPP) are disordered. The 71-residue stretch at 178-248 (RQLNVTDALS…QGFNTFLPPG (71 aa)) folds into the PAH 1 domain. Residues 307–339 (QSSASHPVLQPPAPSTLQFNPSPSPAAPSYPPV) form a disordered region. Pro residues predominate over residues 328–337 (SPSPAAPSYP). Positions 345-415 (QAADLDQAIN…EEFKRFLPDV (71 aa)) constitute a PAH 2 domain. Disordered stretches follow at residues 422–504 (ETQD…AFNV), 928–968 (AREN…DESS), and 1343–1522 (SGKA…KDDL). Residues 426-441 (KSTVVPQESATATPKR) are compositionally biased toward polar residues. S442 bears the Phosphoserine mark. Residues 442-468 (SPSATPTSALPPIGKFAPPTTAKAQPA) are compositionally biased toward low complexity. T446 bears the Phosphothreonine mark. Residues 504–576 (VPIAQNKNPS…NWLKDLVKYN (73 aa)) enclose the PAH 3 domain. The span at 928-960 (ARENRSSVKEDYVSESTERTPDASEIDEHISEH) shows a compositional bias: basic and acidic residues. Residues 1385–1398 (GKSSVTRGNKTNLK) are compositionally biased toward polar residues. Positions 1403–1432 (RNNDDSSNKINLSEKEKEKESIEDEEKNRE) are enriched in basic and acidic residues. Phosphoserine is present on S1443. Over residues 1461 to 1474 (TSSHRPERSSEKKS) the composition is skewed to basic and acidic residues. Residues 1478–1487 (VFTSVKQTAE) are compositionally biased toward polar residues. Positions 1488-1522 (NDADNEDDKTDMDDQTEETLDADNTMEEEPSKDDL) are enriched in acidic residues.

The protein localises to the nucleus. Has a role in modulating the nuclear import of TF1 virus-like particles. Essential for viability. The protein is Paired amphipathic helix protein pst1 (pst1) of Schizosaccharomyces pombe (strain 972 / ATCC 24843) (Fission yeast).